Reading from the N-terminus, the 266-residue chain is GATA-type zinc finger protein 1 (266 aa).

Disordered regions lie at residues 1–31 (MEAA…KSRP), 106–129 (TQCP…PRKQ), and 171–191 (CSQK…SSEA). The span at 106 to 121 (TQCPNLEISSATSPAS) shows a compositional bias: polar residues. Residues 197 to 221 (CASCRTQRTPLWRDAEDGTPLCNAC) form a GATA-type zinc finger.

As to expression, specifically expressed in adult testis and ovary. Expressed at high levels in the somatic cells of the developing gonads, including Leydig cells in the testes and granulosa cells in the ovaries.

It localises to the nucleus. Its function is as follows. Transcriptional regulator that plays a key role in germ cell development. Determines the oogenic fate by activating key genes for the oogenic program and meiotic prophase entry. Acts downstream of bone morphogenetic protein (BMP) by regulating expression of genes required for the oogenic programs, which are repressed by Polycomb activities in sexually uncommitted germ cells. Regulates expression of STRA8, a central downstream effector for the meiotic program. Acts independently of retinoic acid (RA). In males, not required for germ-cell sex determination, but required to allow the spermatogonia to efficiently accomplish the meiotic prophase. The polypeptide is GATA-type zinc finger protein 1 (Mus musculus (Mouse)).